A 103-amino-acid polypeptide reads, in one-letter code: NAIPGQHYRWPGAKVPYVIDSSLQSNTGFIQRAFQNYALGFYHEQNRSDRDDYLIIYVDNVQKGMEFNFAKLAPSQNILYTTFDYGSIMIYGNDAFSRDGSPM.

The Peptidase M12A domain occupies 1–103; that stretch reads NAIPGQHYRW…DAFSRDGSPM (103 aa).

Requires Zn(2+) as cofactor.

Its function is as follows. Active against casein. Has a role as a digestive enzyme. The chain is Astacin-like peptidase p16 from Argiope aurantia (Black-and-yellow garden spider).